We begin with the raw amino-acid sequence, 244 residues long: Venom nerve growth factor 2 (244 aa).

The first 18 residues, 1–18 (MSMLCYTLIIAFLIGTWA), serve as a signal peptide directing secretion. Residues 19-125 (APKSEDNVPL…TLNRNIRAKR (107 aa)) constitute a propeptide that is removed on maturation. Positions 47 to 66 (GLKTSRNTDQRHPAPKKAED) are enriched in basic and acidic residues. The interval 47 to 67 (GLKTSRNTDQRHPAPKKAEDQ) is disordered. 3 disulfide bridges follow: C139–C205, C181–C233, and C193–C235.

It belongs to the NGF-beta family. In terms of assembly, homodimer; non-covalently linked. As to expression, expressed by the venom gland.

It localises to the secreted. In terms of biological role, nerve growth factor is important for the development and maintenance of the sympathetic and sensory nervous systems. It stimulates division and differentiation of sympathetic and embryonic sensory neurons as well as basal forebrain cholinergic neurons in the brain. Its relevance in the snake venom is not clear. However, it has been shown to inhibit metalloproteinase-dependent proteolysis of platelet glycoprotein Ib alpha, suggesting a metalloproteinase inhibition to prevent metalloprotease autodigestion and/or protection against prey proteases. Binds a lipid between the two protein chains in the homodimer. The lipid-bound form promotes histamine relase from mouse mast cells, contrary to the lipid-free form. The polypeptide is Venom nerve growth factor 2 (Tropidechis carinatus (Australian rough-scaled snake)).